The following is a 320-amino-acid chain: Very-long-chain 3-oxoacyl-CoA reductase (320 aa).

A helical transmembrane segment spans residues 17–37 (FWYLGVVAAVWWGLRAAWCLL). 56-85 (GKWAVVTGATDGIGKAYAEELAKRGMNIVL) contacts NADP(+). 2 helical membrane-spanning segments follow: residues 189–209 (GVIL…LTVY) and 283–303 (AIMG…SLGM). Residue serine 196 participates in substrate binding. Tyrosine 209 functions as the Proton acceptor in the catalytic mechanism.

This sequence belongs to the short-chain dehydrogenases/reductases (SDR) family. 17-beta-HSD 3 subfamily.

Its subcellular location is the endoplasmic reticulum membrane. It carries out the reaction a very-long-chain (3R)-3-hydroxyacyl-CoA + NADP(+) = a very-long-chain 3-oxoacyl-CoA + NADPH + H(+). The catalysed reaction is 17beta-estradiol + NAD(+) = estrone + NADH + H(+). It catalyses the reaction 17beta-estradiol + NADP(+) = estrone + NADPH + H(+). The enzyme catalyses 3-oxooctadecanoyl-CoA + NADPH + H(+) = (3R)-hydroxyoctadecanoyl-CoA + NADP(+). It carries out the reaction (7Z,10Z,13Z,16Z)-3-oxodocosatetraenoyl-CoA + NADPH + H(+) = (3R)-hydroxy-(7Z,10Z,13Z,16Z)-docosatetraenoyl-CoA + NADP(+). The catalysed reaction is 3-oxo-(7Z,10Z,13Z,16Z,19Z)-docosapentaenoyl-CoA + NADPH + H(+) = (3R)-hydroxy-(7Z,10Z,13Z,16Z,19Z)-docosapentaenoyl-CoA + NADP(+). It catalyses the reaction (8Z,11Z,14Z)-3-oxoeicosatrienoyl-CoA + NADPH + H(+) = (3R)-hydroxy-(8Z,11Z,14Z)-eicosatrienoyl-CoA + NADP(+). Its pathway is lipid metabolism; fatty acid biosynthesis. It functions in the pathway steroid biosynthesis; estrogen biosynthesis. Its function is as follows. Catalyzes the second of the four reactions of the long-chain fatty acids elongation cycle. This endoplasmic reticulum-bound enzymatic process, allows the addition of two carbons to the chain of long- and very long-chain fatty acids/VLCFAs per cycle. This enzyme has a 3-ketoacyl-CoA reductase activity, reducing 3-ketoacyl-CoA to 3-hydroxyacyl-CoA, within each cycle of fatty acid elongation. Thereby, it may participate in the production of VLCFAs of different chain lengths that are involved in multiple biological processes as precursors of membrane lipids and lipid mediators. May also catalyze the transformation of estrone (E1) into estradiol (E2) and play a role in estrogen formation. The sequence is that of Very-long-chain 3-oxoacyl-CoA reductase (hsd17b12) from Xenopus tropicalis (Western clawed frog).